The following is a 457-amino-acid chain: Putative transposase y4bF (457 aa).

Residues 128–313 (TFHQPRLRRE…RPLNLAPDRL (186 aa)) form the Integrase catalytic domain. The disordered stretch occupies residues 406–440 (QDERPAPKVRTNSEKNGYTPRGRKPGKRTDFMNDP).

The sequence is that of Putative transposase y4bF from Sinorhizobium fredii (strain NBRC 101917 / NGR234).